A 127-amino-acid chain; its full sequence is Aspartate 1-decarboxylase (127 aa).

The active-site Schiff-base intermediate with substrate; via pyruvic acid is the Ser25. Ser25 carries the pyruvic acid (Ser) modification. Residue Thr57 coordinates substrate. Catalysis depends on Tyr58, which acts as the Proton donor. A substrate-binding site is contributed by 73 to 75 (GAA).

It belongs to the PanD family. Heterooctamer of four alpha and four beta subunits. Requires pyruvate as cofactor. Post-translationally, is synthesized initially as an inactive proenzyme, which is activated by self-cleavage at a specific serine bond to produce a beta-subunit with a hydroxyl group at its C-terminus and an alpha-subunit with a pyruvoyl group at its N-terminus.

The protein resides in the cytoplasm. The enzyme catalyses L-aspartate + H(+) = beta-alanine + CO2. The protein operates within cofactor biosynthesis; (R)-pantothenate biosynthesis; beta-alanine from L-aspartate: step 1/1. Catalyzes the pyruvoyl-dependent decarboxylation of aspartate to produce beta-alanine. The chain is Aspartate 1-decarboxylase from Bacillus velezensis (strain DSM 23117 / BGSC 10A6 / LMG 26770 / FZB42) (Bacillus amyloliquefaciens subsp. plantarum).